A 105-amino-acid chain; its full sequence is Large ribosomal subunit protein uL24 (105 aa).

Belongs to the universal ribosomal protein uL24 family. Part of the 50S ribosomal subunit.

Its function is as follows. One of two assembly initiator proteins, it binds directly to the 5'-end of the 23S rRNA, where it nucleates assembly of the 50S subunit. In terms of biological role, one of the proteins that surrounds the polypeptide exit tunnel on the outside of the subunit. This is Large ribosomal subunit protein uL24 from Novosphingobium aromaticivorans (strain ATCC 700278 / DSM 12444 / CCUG 56034 / CIP 105152 / NBRC 16084 / F199).